We begin with the raw amino-acid sequence, 98 residues long: MSMVYINIFLAFTLSFMGLLIYRSHLMSSLLCLEGMMLSLFVMMTITILINHLTLASMTPIILLVFAACEAALGLSLLVMISTTYGTDYVQNLNLLQC.

A run of 3 helical transmembrane segments spans residues 1 to 21 (MSMVYINIFLAFTLSFMGLLI), 30 to 50 (LLCLEGMMLSLFVMMTITILI), and 61 to 81 (IILLVFAACEAALGLSLLVMI).

It belongs to the complex I subunit 4L family. As to quaternary structure, core subunit of respiratory chain NADH dehydrogenase (Complex I) which is composed of 45 different subunits.

Its subcellular location is the mitochondrion inner membrane. The catalysed reaction is a ubiquinone + NADH + 5 H(+)(in) = a ubiquinol + NAD(+) + 4 H(+)(out). Functionally, core subunit of the mitochondrial membrane respiratory chain NADH dehydrogenase (Complex I) which catalyzes electron transfer from NADH through the respiratory chain, using ubiquinone as an electron acceptor. Part of the enzyme membrane arm which is embedded in the lipid bilayer and involved in proton translocation. The protein is NADH-ubiquinone oxidoreductase chain 4L (MT-ND4L) of Neovison vison (American mink).